Consider the following 698-residue polypeptide: Phenylalanine aminomutase (L-beta-phenylalanine forming) (698 aa).

The active-site Proton donor/acceptor is the Y80. Residues 175-177 (ASG) constitute a cross-link (5-imidazolinone (Ala-Gly)). S176 is subject to 2,3-didehydroalanine (Ser). N231, Q319, R325, N355, K427, E455, and N458 together coordinate (E)-cinnamate.

The protein belongs to the PAL/histidase family. Homotetramer. Post-translationally, contains an active site 4-methylidene-imidazol-5-one (MIO), which is formed autocatalytically by cyclization and dehydration of residues Ala-Ser-Gly.

The protein resides in the cytoplasm. The enzyme catalyses L-phenylalanine = L-beta-phenylalanine. It carries out the reaction L-phenylalanine = (E)-cinnamate + NH4(+). Its pathway is alkaloid biosynthesis; taxol biosynthesis. It participates in phenylpropanoid metabolism; trans-cinnamate biosynthesis; trans-cinnamate from L-phenylalanine: step 1/1. In terms of biological role, phenylalanine aminomutase that catalyzes the rearrangement of L-phenylalanine to R-beta-phenylalanine. Catalyzes the first committed step in the biosynthesis of the side chain of the alkaloid taxol (paclitaxel), a widely-used compound with antitumor activity. Also has low phenylalanine ammonia-lyase activity. The protein is Phenylalanine aminomutase (L-beta-phenylalanine forming) (pam) of Taxus canadensis (Canadian yew).